We begin with the raw amino-acid sequence, 370 residues long: Sensor histidine kinase DesK (370 aa).

Residues 1–10 (MIKNHFTFQK) are Extracellular-facing. The chain crosses the membrane as a helical span at residues 11 to 31 (LNGITPYIWTIFFILPFYFIW). Residues 32–36 (KSSST) lie on the Cytoplasmic side of the membrane. A helical membrane pass occupies residues 37–57 (FVIIVGIILTLLFFSVYRFAF). Over 58–70 (VSKGWTIYLWGFL) the chain is Extracellular. The helical transmembrane segment at 71–91 (LIGISTASITLFSYIYFAFFI) threads the bilayer. Topologically, residues 92–103 (AYFIGNIKERVP) are cytoplasmic. Residues 104-124 (FHILYYVHLISAAVAANFSLV) traverse the membrane as a helical segment. The Extracellular portion of the chain corresponds to 125-128 (LKKE). Residues 129–149 (FFLTQIPFVVITLISAILLPF) traverse the membrane as a helical segment. Residues 150–370 (SIKSRKERER…LTMAIPNNSK (221 aa)) lie on the Cytoplasmic side of the membrane. The 184-residue stretch at 186–369 (DLHDTLGQKL…KLTMAIPNNS (184 aa)) folds into the Histidine kinase domain. Histidine 188 is modified (phosphohistidine; by autocatalysis).

Its subcellular location is the cell membrane. It catalyses the reaction ATP + protein L-histidine = ADP + protein N-phospho-L-histidine.. Member of the two-component regulatory system DesR/DesK, responsible for cold induction of the des gene coding for the Delta5 acyl-lipid desaturase. Acts as a sensor of the membrane fluidity. Probably activates DesR by phosphorylation. The sequence is that of Sensor histidine kinase DesK (desK) from Bacillus subtilis (strain 168).